Reading from the N-terminus, the 162-residue chain is tRNA-specific adenosine deaminase (162 aa).

Positions 3–115 (DSDKYFMKCA…KNLQKYICCK (113 aa)) constitute a CMP/dCMP-type deaminase domain. Position 54 (H54) interacts with Zn(2+). E56 functions as the Proton donor in the catalytic mechanism. C84 and C87 together coordinate Zn(2+).

It belongs to the cytidine and deoxycytidylate deaminase family. As to quaternary structure, homodimer. The cofactor is Zn(2+).

It catalyses the reaction adenosine(34) in tRNA + H2O + H(+) = inosine(34) in tRNA + NH4(+). Its function is as follows. Catalyzes the deamination of adenosine to inosine at the wobble position 34 of tRNA(Arg2). The chain is tRNA-specific adenosine deaminase from Buchnera aphidicola subsp. Baizongia pistaciae (strain Bp).